The sequence spans 399 residues: Phosphoglycerate kinase (399 aa).

Substrate-binding positions include 22–24 (DLN), Arg37, 60–63 (HFGR), Arg119, and Arg152. ATP-binding positions include Lys202, Glu324, and 354-357 (GGDT).

It belongs to the phosphoglycerate kinase family. Monomer.

It localises to the cytoplasm. It carries out the reaction (2R)-3-phosphoglycerate + ATP = (2R)-3-phospho-glyceroyl phosphate + ADP. Its pathway is carbohydrate degradation; glycolysis; pyruvate from D-glyceraldehyde 3-phosphate: step 2/5. In Sinorhizobium fredii (strain NBRC 101917 / NGR234), this protein is Phosphoglycerate kinase.